Consider the following 72-residue polypeptide: Putative snRNP Sm-like protein (72 aa).

Residues 4 to 72 form the Sm domain; sequence RPLDILNDAL…RGDNVVYVSP (69 aa).

This sequence belongs to the snRNP Sm proteins family.

The chain is Putative snRNP Sm-like protein from Methanococcoides burtonii (strain DSM 6242 / NBRC 107633 / OCM 468 / ACE-M).